The following is a 240-amino-acid chain: Pyridoxine 5'-phosphate synthase (240 aa).

Asn7 provides a ligand contact to 3-amino-2-oxopropyl phosphate. Residue 9 to 10 (DH) participates in 1-deoxy-D-xylulose 5-phosphate binding. Arg18 is a binding site for 3-amino-2-oxopropyl phosphate. Catalysis depends on His43, which acts as the Proton acceptor. 1-deoxy-D-xylulose 5-phosphate is bound by residues Arg45 and His50. Glu70 (proton acceptor) is an active-site residue. Thr100 contacts 1-deoxy-D-xylulose 5-phosphate. His191 functions as the Proton donor in the catalytic mechanism. 3-amino-2-oxopropyl phosphate is bound by residues Gly192 and 213 to 214 (GH).

This sequence belongs to the PNP synthase family. In terms of assembly, homooctamer; tetramer of dimers.

The protein localises to the cytoplasm. The catalysed reaction is 3-amino-2-oxopropyl phosphate + 1-deoxy-D-xylulose 5-phosphate = pyridoxine 5'-phosphate + phosphate + 2 H2O + H(+). It functions in the pathway cofactor biosynthesis; pyridoxine 5'-phosphate biosynthesis; pyridoxine 5'-phosphate from D-erythrose 4-phosphate: step 5/5. Catalyzes the complicated ring closure reaction between the two acyclic compounds 1-deoxy-D-xylulose-5-phosphate (DXP) and 3-amino-2-oxopropyl phosphate (1-amino-acetone-3-phosphate or AAP) to form pyridoxine 5'-phosphate (PNP) and inorganic phosphate. The polypeptide is Pyridoxine 5'-phosphate synthase (Acaryochloris marina (strain MBIC 11017)).